A 90-amino-acid chain; its full sequence is Putative regulatory protein Dred_1699 (90 aa).

This sequence belongs to the RemA family.

The sequence is that of Putative regulatory protein Dred_1699 from Desulforamulus reducens (strain ATCC BAA-1160 / DSM 100696 / MI-1) (Desulfotomaculum reducens).